Reading from the N-terminus, the 47-residue chain is Photosystem II reaction center protein K (47 aa).

Positions 1 to 10 (MNIGFDMILA) are excised as a propeptide. The helical transmembrane segment at 22–42 (LVDVLPVIPLLFLLLAFVWQA) threads the bilayer.

This sequence belongs to the PsbK family. PSII is composed of 1 copy each of membrane proteins PsbA, PsbB, PsbC, PsbD, PsbE, PsbF, PsbH, PsbI, PsbJ, PsbK, PsbL, PsbM, PsbT, PsbX, PsbY, PsbZ, Psb30/Ycf12, at least 3 peripheral proteins of the oxygen-evolving complex and a large number of cofactors. It forms dimeric complexes.

The protein resides in the plastid. It localises to the chloroplast thylakoid membrane. Functionally, one of the components of the core complex of photosystem II (PSII). PSII is a light-driven water:plastoquinone oxidoreductase that uses light energy to abstract electrons from H(2)O, generating O(2) and a proton gradient subsequently used for ATP formation. It consists of a core antenna complex that captures photons, and an electron transfer chain that converts photonic excitation into a charge separation. The sequence is that of Photosystem II reaction center protein K from Mesostigma viride (Green alga).